Reading from the N-terminus, the 279-residue chain is Probable diacylglycerol pyrophosphate phosphatase 1 (279 aa).

Topologically, residues 1-17 (MEAVGKHVKLFWNVYSD) are lumenal. Residues 18–38 (YAVLIAISLSYFVFDVLMLPF) form a helical membrane-spanning segment. At 39–58 (TRQFSLEDITISHPFALHEQ) the chain is on the cytoplasmic side. The chain crosses the membrane as a helical span at residues 59–79 (VPTKYLGIICVFFPALVLYGF). The Lumenal portion of the chain corresponds to 80-86 (GKLRNNS). A helical transmembrane segment spans residues 87 to 107 (LLFWKSLMGLLYSTMVCGLCV). Over 108–163 (SLLKNAVGRPRPDFLARCQPFESTPKTGLVDVLSCSVPWSDKVLQDGFRSFPSGHT) the chain is Cytoplasmic. The segment at 111-119 (KNAVGRPRP) is phosphatase sequence motif I. Positions 159 to 162 (PSGH) are phosphatase sequence motif II. A helical transmembrane segment spans residues 164-184 (SFSFAGLGFLAIFLAGQLKMF). The Lumenal portion of the chain corresponds to 185-187 (RNK). A helical transmembrane segment spans residues 188-208 (TSSWKVVVPLVPLSIASWIGL). Over 209-220 (SRSQDYRHHKED) the chain is Cytoplasmic. The tract at residues 209 to 220 (SRSQDYRHHKED) is phosphatase sequence motif III. A helical transmembrane segment spans residues 221-241 (IAVGALFGFAIAYVVYRQLFP). At 242 to 279 (PLDHHNADILYVQAELDEGYTNVHSAGNSSATNAEQMV) the chain is on the lumenal side.

Belongs to the PA-phosphatase related phosphoesterase family.

It localises to the vacuole membrane. The protein resides in the endoplasmic reticulum membrane. It catalyses the reaction a 1,2-diacyl-sn-glycerol 3-diphosphate + H2O = a 1,2-diacyl-sn-glycero-3-phosphate + phosphate + H(+). The enzyme catalyses a 1,2-diacyl-sn-glycero-3-phosphate + H2O = a 1,2-diacyl-sn-glycerol + phosphate. Catalyzes the dephosphorylation of diacylglycerol phosphate (DGPP) to phosphatidate (PA) and the subsequent dephosphorylation of PA to diacylglycerol (DAG). In Schizosaccharomyces pombe (strain 972 / ATCC 24843) (Fission yeast), this protein is Probable diacylglycerol pyrophosphate phosphatase 1 (dpp1).